Consider the following 530-residue polypeptide: Bifunctional purine biosynthesis protein PurH (530 aa).

Residues 1–148 (MNNARPIHRA…KNHKDVAIVV (148 aa)) form the MGS-like domain.

It belongs to the PurH family.

The enzyme catalyses (6R)-10-formyltetrahydrofolate + 5-amino-1-(5-phospho-beta-D-ribosyl)imidazole-4-carboxamide = 5-formamido-1-(5-phospho-D-ribosyl)imidazole-4-carboxamide + (6S)-5,6,7,8-tetrahydrofolate. The catalysed reaction is IMP + H2O = 5-formamido-1-(5-phospho-D-ribosyl)imidazole-4-carboxamide. Its pathway is purine metabolism; IMP biosynthesis via de novo pathway; 5-formamido-1-(5-phospho-D-ribosyl)imidazole-4-carboxamide from 5-amino-1-(5-phospho-D-ribosyl)imidazole-4-carboxamide (10-formyl THF route): step 1/1. It functions in the pathway purine metabolism; IMP biosynthesis via de novo pathway; IMP from 5-formamido-1-(5-phospho-D-ribosyl)imidazole-4-carboxamide: step 1/1. The chain is Bifunctional purine biosynthesis protein PurH from Vibrio cholerae serotype O1 (strain ATCC 39541 / Classical Ogawa 395 / O395).